A 125-amino-acid polypeptide reads, in one-letter code: S-adenosylmethionine decarboxylase proenzyme (125 aa).

Residue Ser61 is the Schiff-base intermediate with substrate; via pyruvic acid of the active site. At Ser61 the chain carries Pyruvic acid (Ser); by autocatalysis. The active-site Proton acceptor; for processing activity is His66. The Proton donor; for catalytic activity role is filled by Cys81.

Belongs to the prokaryotic AdoMetDC family. Type 1 subfamily. In terms of assembly, heterotetramer of two alpha and two beta chains arranged as a dimer of alpha/beta heterodimers. It depends on pyruvate as a cofactor. Is synthesized initially as an inactive proenzyme. Formation of the active enzyme involves a self-maturation process in which the active site pyruvoyl group is generated from an internal serine residue via an autocatalytic post-translational modification. Two non-identical subunits are generated from the proenzyme in this reaction, and the pyruvate is formed at the N-terminus of the alpha chain, which is derived from the carboxyl end of the proenzyme. The post-translation cleavage follows an unusual pathway, termed non-hydrolytic serinolysis, in which the side chain hydroxyl group of the serine supplies its oxygen atom to form the C-terminus of the beta chain, while the remainder of the serine residue undergoes an oxidative deamination to produce ammonia and the pyruvoyl group blocking the N-terminus of the alpha chain.

The catalysed reaction is S-adenosyl-L-methionine + H(+) = S-adenosyl 3-(methylsulfanyl)propylamine + CO2. The protein operates within amine and polyamine biosynthesis; S-adenosylmethioninamine biosynthesis; S-adenosylmethioninamine from S-adenosyl-L-methionine: step 1/1. Catalyzes the decarboxylation of S-adenosylmethionine to S-adenosylmethioninamine (dcAdoMet), the propylamine donor required for the synthesis of the polyamines spermine and spermidine from the diamine putrescine. This chain is S-adenosylmethionine decarboxylase proenzyme, found in Prochlorococcus marinus (strain MIT 9313).